Consider the following 250-residue polypeptide: 26 kDa periplasmic immunogenic protein (250 aa).

The first 28 residues, Met1–Ala28, serve as a signal peptide directing secretion.

It localises to the periplasm. This chain is 26 kDa periplasmic immunogenic protein (bp26), found in Brucella melitensis biotype 1 (strain ATCC 23456 / CCUG 17765 / NCTC 10094 / 16M).